The sequence spans 521 residues: Bifunctional purine biosynthesis protein PurH (521 aa).

One can recognise an MGS-like domain in the interval 1-145; the sequence is MIKQALISVS…KNHRDVTVVV (145 aa).

It belongs to the PurH family.

The enzyme catalyses (6R)-10-formyltetrahydrofolate + 5-amino-1-(5-phospho-beta-D-ribosyl)imidazole-4-carboxamide = 5-formamido-1-(5-phospho-D-ribosyl)imidazole-4-carboxamide + (6S)-5,6,7,8-tetrahydrofolate. It carries out the reaction IMP + H2O = 5-formamido-1-(5-phospho-D-ribosyl)imidazole-4-carboxamide. It functions in the pathway purine metabolism; IMP biosynthesis via de novo pathway; 5-formamido-1-(5-phospho-D-ribosyl)imidazole-4-carboxamide from 5-amino-1-(5-phospho-D-ribosyl)imidazole-4-carboxamide (10-formyl THF route): step 1/1. It participates in purine metabolism; IMP biosynthesis via de novo pathway; IMP from 5-formamido-1-(5-phospho-D-ribosyl)imidazole-4-carboxamide: step 1/1. The sequence is that of Bifunctional purine biosynthesis protein PurH from Burkholderia cenocepacia (strain ATCC BAA-245 / DSM 16553 / LMG 16656 / NCTC 13227 / J2315 / CF5610) (Burkholderia cepacia (strain J2315)).